The sequence spans 419 residues: Dual specificity protein phosphatase 7 (419 aa).

Residues 1–41 (MKNQLRGPPVRAHMSTSGAAAAGGTRAGSEPGAGSGSSAGI) are disordered. A compositionally biased stretch (low complexity) spans 15-30 (STSGAAAAGGTRAGSE). Residues 31 to 41 (PGAGSGSSAGI) show a composition bias toward gly residues. The Rhodanese domain maps to 68 to 187 (GGASLLLLDC…FQTEYSEHCE (120 aa)). Positions 216 to 240 (CSDGESDRELPSSATESDGSPVPSS) are disordered. Polar residues predominate over residues 227 to 240 (SSATESDGSPVPSS). The 144-residue stretch at 244 to 387 (FPVQILPYLY…LLDFERTLGL (144 aa)) folds into the Tyrosine-protein phosphatase domain. The active-site Phosphocysteine intermediate is cysteine 331. Position 331–337 (331–337 (CLAGISR)) interacts with substrate.

Belongs to the protein-tyrosine phosphatase family. Non-receptor class dual specificity subfamily. As to quaternary structure, interacts with MAPK1/ERK2; the interaction enhances DUSP7 phosphatase activity.

It is found in the cytoplasm. It catalyses the reaction O-phospho-L-tyrosyl-[protein] + H2O = L-tyrosyl-[protein] + phosphate. The catalysed reaction is O-phospho-L-seryl-[protein] + H2O = L-seryl-[protein] + phosphate. The enzyme catalyses O-phospho-L-threonyl-[protein] + H2O = L-threonyl-[protein] + phosphate. Its activity is regulated as follows. Strongly inhibited by sodium orthovanadate. In terms of biological role, dual specificity protein phosphatase. Shows high activity towards MAPK1/ERK2. Also has lower activity towards MAPK14 and MAPK8. In arrested oocytes, plays a role in meiotic resumption. Promotes nuclear envelope breakdown and activation of the CDK1/Cyclin-B complex in oocytes, probably by dephosphorylating and inactivating the conventional protein kinase C (cPKC) isozyme PRKCB. May also inactivate PRKCA and/or PRKCG. Also important in oocytes for normal chromosome alignment on the metaphase plate and progression to anaphase, where it might regulate activity of the spindle-assembly checkpoint (SAC) complex. The sequence is that of Dual specificity protein phosphatase 7 from Rattus norvegicus (Rat).